The sequence spans 461 residues: Cysteine--tRNA ligase (461 aa).

Zn(2+) is bound at residue Cys-28. The short motif at 30 to 40 (ITIYDLCHIGH) is the 'HIGH' region element. 3 residues coordinate Zn(2+): Cys-209, His-234, and Glu-238. The short motif at 266 to 270 (KMSKS) is the 'KMSKS' region element. An ATP-binding site is contributed by Lys-269.

Belongs to the class-I aminoacyl-tRNA synthetase family. Monomer. It depends on Zn(2+) as a cofactor.

Its subcellular location is the cytoplasm. It catalyses the reaction tRNA(Cys) + L-cysteine + ATP = L-cysteinyl-tRNA(Cys) + AMP + diphosphate. The sequence is that of Cysteine--tRNA ligase from Yersinia enterocolitica serotype O:8 / biotype 1B (strain NCTC 13174 / 8081).